We begin with the raw amino-acid sequence, 209 residues long: Large ribosomal subunit protein uL3 (209 aa).

The tract at residues 124–156 (KRHNFSGGQRTHGQSDRQRAPGSVGGSSDPSRV) is disordered.

It belongs to the universal ribosomal protein uL3 family. Part of the 50S ribosomal subunit. Forms a cluster with proteins L14 and L19.

Functionally, one of the primary rRNA binding proteins, it binds directly near the 3'-end of the 23S rRNA, where it nucleates assembly of the 50S subunit. This is Large ribosomal subunit protein uL3 from Pelodictyon phaeoclathratiforme (strain DSM 5477 / BU-1).